A 265-amino-acid chain; its full sequence is Apolipoprotein A-I (265 aa).

An N-terminal signal peptide occupies residues 1 to 18; it reads MKAVLLTLAVLFLTGSQA. Tandem repeats lie at residues 67–88 and 89–110. Residues 67-265 form a 10 X approximate tandem repeats region; it reads LKLLDNWDSL…DEASKKLNAQ (199 aa). Residue M109 is modified to Methionine sulfoxide. Residues 111–121 form a 3; half-length repeat; that stretch reads KDLEEVKQKVQ. Tandem repeats lie at residues 122 to 142, 144 to 165, 166 to 187, 188 to 209, and 210 to 230. The 9; half-length repeat unit spans residues 231-241; the sequence is PALEDLRQGLV. Repeat unit 10 spans residues 242 to 265; that stretch reads PVLESLKVSILAAIDEASKKLNAQ.

This sequence belongs to the apolipoprotein A1/A4/E family. In terms of assembly, homodimer. Interacts with APOA1BP and CLU. Component of a sperm activating protein complex (SPAP), consisting of APOA1, an immunoglobulin heavy chain, an immunoglobulin light chain and albumin. Interacts with NDRG1. Interacts with SCGB3A2. Interacts with NAXE and YJEFN3. Glycosylated. Post-translationally, palmitoylated. In terms of processing, phosphorylation sites are present in the extracellular medium. Major protein of plasma HDL, also found in chylomicrons.

Its subcellular location is the secreted. Functionally, participates in the reverse transport of cholesterol from tissues to the liver for excretion by promoting cholesterol efflux from tissues and by acting as a cofactor for the lecithin cholesterol acyltransferase (LCAT). As part of the SPAP complex, activates spermatozoa motility. The protein is Apolipoprotein A-I (APOA1) of Tursiops truncatus (Atlantic bottle-nosed dolphin).